We begin with the raw amino-acid sequence, 469 residues long: Glutamate--tRNA ligase (469 aa).

Residues 9–19 carry the 'HIGH' region motif; the sequence is PSPTGFLHVGG. A 'KMSKS' region motif is present at residues 236–240; that stretch reads KLSKR. Lysine 239 provides a ligand contact to ATP.

This sequence belongs to the class-I aminoacyl-tRNA synthetase family. Glutamate--tRNA ligase type 1 subfamily. In terms of assembly, monomer.

The protein localises to the cytoplasm. It catalyses the reaction tRNA(Glu) + L-glutamate + ATP = L-glutamyl-tRNA(Glu) + AMP + diphosphate. Its function is as follows. Catalyzes the attachment of glutamate to tRNA(Glu) in a two-step reaction: glutamate is first activated by ATP to form Glu-AMP and then transferred to the acceptor end of tRNA(Glu). The chain is Glutamate--tRNA ligase from Shewanella frigidimarina (strain NCIMB 400).